The chain runs to 144 residues: Protein D (144 aa).

In Escherichia coli, this protein is Protein D (D).